Here is a 741-residue protein sequence, read N- to C-terminus: mRNA decapping complex subunit 2 (741 aa).

The interaction with pdc1 stretch occupies residues 1-243; that stretch reads MSFTNATFSQ…KKRNIANNTT (243 aa). Residues 94–227 form the Nudix hydrolase domain; sequence TRIPVRGAIM…KFYMVIPFLA (134 aa). Positions 128-149 match the Nudix box motif; that stretch reads GKIDKDESDVDCAIREVYEETG. Arg-167 and Tyr-220 together coordinate ATP. 2 stretches are compositionally biased toward polar residues: residues 268–278 and 439–453; these read TAPSDLATPQP and YGSS…QTQQ. 5 disordered regions span residues 268–289, 425–453, 525–552, 592–616, and 654–721; these read TAPS…VESH, SVSS…QTQQ, TKKF…PNAN, GLPT…SQVK, and VSPQ…FKGS. 3 stretches are compositionally biased toward basic and acidic residues: residues 606-616, 681-690, and 707-721; these read NNERKASSQVK, ENSETNKNHV, and DQKK…FKGS.

It belongs to the Nudix hydrolase family. DCP2 subfamily. Component of the decapping complex composed of dcp1 and dcp2. Interacts with edc3. Interacts with pdc1; via N-terminus. Interacts with pdc2. Mn(2+) serves as cofactor.

The protein localises to the cytoplasm. It localises to the P-body. Functionally, catalytic component of the decapping complex necessary for the degradation of mRNAs, both in normal mRNA turnover and in nonsense-mediated mRNA decay. Removes the 7-methyl guanine cap structure from mRNA molecules, yielding a 5'-phosphorylated mRNA fragment and 7m-GDP. Decapping is the major pathway of mRNA degradation in yeast. It occurs through deadenylation, decapping and subsequent 5' to 3' exonucleolytic decay of the transcript body. This Schizosaccharomyces pombe (strain 972 / ATCC 24843) (Fission yeast) protein is mRNA decapping complex subunit 2 (dcp2).